We begin with the raw amino-acid sequence, 935 residues long: Peptidyl-glycine alpha-amidating monooxygenase A (935 aa).

An N-terminal signal peptide occupies residues 1–36; that stretch reads MASLSSSFLVLFLLFQNSCYCFRSPLSVFKRYEEST. The peptidylglycine alpha-hydroxylating monooxygenase stretch occupies residues 1–390; it reads MASLSSSFLV…KREEEEVLDQ (390 aa). Topologically, residues 37–825 are intragranular; sequence RSLSNDCLGT…VQESSAGVSF (789 aa). 5 disulfide bridges follow: cysteine 43/cysteine 182, cysteine 77/cysteine 122, cysteine 110/cysteine 127, cysteine 223/cysteine 330, and cysteine 289/cysteine 311. Cu(2+) is bound by residues histidine 103 and histidine 104. Cu(2+) contacts are provided by histidine 168, histidine 238, histidine 240, and methionine 310. Residues 362–385 form a disordered region; that stretch reads HGHHHTEAEPEKNTGLQQPKREEE. Residues 391-712 form a peptidyl-alpha-hydroxyglycine alpha-amidating lyase region; that stretch reads DVHLEEDTDW…SPSKAEHRSV (322 aa). Position 426 (arginine 426) interacts with a protein. NHL repeat units follow at residues 463–504, 512–557, and 565–609; these read SKVL…LGAG, LGRA…FSPN, and GEET…FHAE. 2 disulfide bridges follow: cysteine 526–cysteine 547 and cysteine 594–cysteine 605. A protein-binding residues include tyrosine 546 and arginine 598. A glycan (N-linked (GlcNAc...) asparagine) is linked at asparagine 658. The NHL 4 repeat unit spans residues 662-705; it reads GDILDTFIPARKNFDMPHDIAAADDGTVYVGDAHANAVWKFSPS. Residues 728-751 are compositionally biased toward basic and acidic residues; the sequence is FETHIRSRPKTNESVEKQTQEKQQ. Disordered stretches follow at residues 728 to 764 and 778 to 812; these read FETHIRSRPKTNESVEKQTQEKQQKQKNSAGVSTQEK and QEKQNVVQESSAGVPTQEKQSVVQESSAGVSTQEK. N-linked (GlcNAc...) asparagine glycosylation occurs at asparagine 739. Residues 755–764 are compositionally biased toward polar residues; the sequence is NSAGVSTQEK. Residues 826-846 form a helical membrane-spanning segment; the sequence is VLIITLLIIPIAVLIAIAIFI. Over 847–935 the chain is Cytoplasmic; sequence RWRKVRMYGG…PIPPAPVSSS (89 aa). Residues 896-935 form a disordered region; that stretch reads KGFDRLSTEGSDQEKDDDDGSDSEEEYSAPPIPPAPVSSS. Acidic residues predominate over residues 909 to 922; it reads EKDDDDGSDSEEEY. Residues 925–935 are compositionally biased toward pro residues; sequence PPIPPAPVSSS.

In the C-terminal section; belongs to the peptidyl-alpha-hydroxyglycine alpha-amidating lyase family. This sequence in the N-terminal section; belongs to the copper type II ascorbate-dependent monooxygenase family. Monomer. Requires Zn(2+) as cofactor. Cu(2+) is required as a cofactor.

It localises to the cytoplasmic vesicle. It is found in the secretory vesicle membrane. The catalysed reaction is a [peptide]-C-terminal glycine + 2 L-ascorbate + O2 = a [peptide]-C-terminal (2S)-2-hydroxyglycine + 2 monodehydro-L-ascorbate radical + H2O. It carries out the reaction a [peptide]-C-terminal (2S)-2-hydroxyglycine = a [peptide]-C-terminal amide + glyoxylate. Functionally, bifunctional enzyme that catalyzes amidation of the C-terminus of proteins. Alpha-amidation is present at the C-terminus of many endocrine hormones and neuropeptides and is required for their activity. C-terminal amidation also takes place in response to protein fragmentation triggered by oxidative stress, promoting degradation of amidated protein fragments by the proteasome. Alpha-amidation involves two sequential reactions, both of which are catalyzed by separate catalytic domains of the enzyme. The first step, catalyzed by peptidyl alpha-hydroxylating monooxygenase (PHM) domain, is the copper-, ascorbate-, and O2- dependent stereospecific hydroxylation (with S stereochemistry) at the alpha-carbon (C-alpha) of the C-terminal glycine of the peptidylglycine substrate. The second step, catalyzed by the peptidylglycine amidoglycolate lyase (PAL) domain, is the zinc-dependent cleavage of the N-C-alpha bond, producing the alpha-amidated peptide and glyoxylate. The chain is Peptidyl-glycine alpha-amidating monooxygenase A (pam-a) from Xenopus laevis (African clawed frog).